Here is a 372-residue protein sequence, read N- to C-terminus: MSNQHTLLTSNLLPVGSNISTWWNFGSMLLTCLIMQILTGFFLAIHYTANINLAFSSVIHITRDVPYGWIMQNLHAIGASMFFICIYIHIARGLYYGLYLNKEVWLSGTTLLITLMATAFFGYVLPWGQMSFWAATVITNLLTAIPHLGTVLTTWLWGGFSINDPTLTRFFALHFILPFAIISLSSIHIILLHNEGSNNPLGTNSDIDKIPFHPYHSYKDMLMITIMVTLLFIILSFLPNLLNDPENFSKANPLITPQHIKPEWYFLFAYGILRSIPNKLGGTMALTMSIMILMTTPFTHTSHTRSMIFRPLSQTMFWTLIVTFIMITWTATKPVEPPFITISQTTTVFYFSFFIMTPLLGWTENKIMMMKN.

The next 4 helical transmembrane spans lie at 25–45, 69–90, 105–125, and 170–190; these read FGSM…FLAI, WIMQ…YIHI, WLSG…GYVL, and FFAL…IHII. The heme b site is built by histidine 75 and histidine 89. Heme b contacts are provided by histidine 174 and histidine 188. Histidine 193 provides a ligand contact to a ubiquinone. 4 helical membrane-spanning segments follow: residues 218–238, 280–300, 312–332, and 339–358; these read YKDM…LSFL, LGGT…PFTH, LSQT…WTAT, and FITI…IMTP.

Belongs to the cytochrome b family. In terms of assembly, the cytochrome bc1 complex contains 3 respiratory subunits (MT-CYB, CYC1 and UQCRFS1), 2 core proteins (UQCRC1 and UQCRC2) and probably 6 low-molecular weight proteins. Heme b is required as a cofactor.

Its subcellular location is the mitochondrion inner membrane. Its function is as follows. Component of the ubiquinol-cytochrome c reductase complex (complex III or cytochrome b-c1 complex) that is part of the mitochondrial respiratory chain. The b-c1 complex mediates electron transfer from ubiquinol to cytochrome c. Contributes to the generation of a proton gradient across the mitochondrial membrane that is then used for ATP synthesis. The polypeptide is Cytochrome b (MT-CYB) (Aspidelaps scutatus (Shield-nose snake)).